The primary structure comprises 792 residues: Putative cellulose synthase-like protein H3 (792 aa).

2 consecutive transmembrane segments (helical) span residues 25 to 45 (AWMLANFVVLFLLLALLVRRA) and 55 to 75 (VGGAAWRVAFACEAWFAFVWL). The interval 132-154 (GRHVRDDGGPGARAAGGDGEQGA) is disordered. Over residues 140 to 151 (GPGARAAGGDGE) the composition is skewed to gly residues. Active-site residues include Asp181 and Asp501. The next 6 membrane-spanning stretches (helical) occupy residues 579 to 599 (VWAVRGFVELCYELLVPYCLL), 613 to 632 (FNITLALFLTYNTYNFVEYM), 650 to 670 (IISASAWLLAFFTVLLKTIGL), 706 to 726 (VFIPVTALTMLNIVAITIGTW), 739 to 759 (GPGISEFMSCGWLLLCLLPFV), and 768 to 788 (YGIPWSVKLKASLLVALFLFC).

It belongs to the glycosyltransferase 2 family. Plant cellulose synthase-like H subfamily.

It localises to the golgi apparatus membrane. Thought to be a Golgi-localized beta-glycan synthase that polymerize the backbones of noncellulosic polysaccharides (hemicelluloses) of plant cell wall. In Oryza sativa subsp. japonica (Rice), this protein is Putative cellulose synthase-like protein H3 (CSLH3).